A 320-amino-acid chain; its full sequence is Cytochrome f (320 aa).

The signal sequence occupies residues 1–35; it reads MQTRKTFSWIKEEITRSISVLLMIYIITWASISNA. Positions 36, 56, 59, and 60 each coordinate heme. The helical transmembrane segment at 286–306 threads the bilayer; the sequence is VQGLLFFLASVILAQIFLVLK.

The protein belongs to the cytochrome f family. In terms of assembly, the 4 large subunits of the cytochrome b6-f complex are cytochrome b6, subunit IV (17 kDa polypeptide, petD), cytochrome f and the Rieske protein, while the 4 small subunits are PetG, PetL, PetM and PetN. The complex functions as a dimer. It depends on heme as a cofactor.

The protein resides in the plastid. Its subcellular location is the chloroplast thylakoid membrane. Functionally, component of the cytochrome b6-f complex, which mediates electron transfer between photosystem II (PSII) and photosystem I (PSI), cyclic electron flow around PSI, and state transitions. The polypeptide is Cytochrome f (Manihot esculenta (Cassava)).